We begin with the raw amino-acid sequence, 573 residues long: Proline--tRNA ligase (573 aa).

It belongs to the class-II aminoacyl-tRNA synthetase family. ProS type 1 subfamily. As to quaternary structure, homodimer.

It is found in the cytoplasm. It carries out the reaction tRNA(Pro) + L-proline + ATP = L-prolyl-tRNA(Pro) + AMP + diphosphate. Its function is as follows. Catalyzes the attachment of proline to tRNA(Pro) in a two-step reaction: proline is first activated by ATP to form Pro-AMP and then transferred to the acceptor end of tRNA(Pro). As ProRS can inadvertently accommodate and process non-cognate amino acids such as alanine and cysteine, to avoid such errors it has two additional distinct editing activities against alanine. One activity is designated as 'pretransfer' editing and involves the tRNA(Pro)-independent hydrolysis of activated Ala-AMP. The other activity is designated 'posttransfer' editing and involves deacylation of mischarged Ala-tRNA(Pro). The misacylated Cys-tRNA(Pro) is not edited by ProRS. The chain is Proline--tRNA ligase from Geobacter sp. (strain M21).